The sequence spans 360 residues: RNA-binding protein 1 (360 aa).

An RRM 1 domain is found at 6-82 (YKLFVGGIAK…KPVDVRKAIR (77 aa)). The stretch at 93-113 (MQFLERKVQQMNGGLREMSSN) forms a coiled coil. The RRM 2 domain occupies 120–197 (KKIFVGGLSS…KRVEVKRAIP (78 aa)).

Highly expressed in inflorescences and roots. Detected in leaves and seedlings, but not in stems. Expressed in vegetative shoot apex and root meristem, but not in root cap. Detected in flower buds, junction of pedicels, joints of immature siliques and pistil.

Functionally, RNA binding protein. Can also bind in vitro to single-stranded DNA. This chain is RNA-binding protein 1 (RBP1), found in Arabidopsis thaliana (Mouse-ear cress).